An 89-amino-acid chain; its full sequence is Large ribosomal subunit protein bL27 (89 aa).

The disordered stretch occupies residues 1–22; the sequence is MAHKKAGGSSRNGRDSESKRLG.

It belongs to the bacterial ribosomal protein bL27 family.

In Rhizobium etli (strain CIAT 652), this protein is Large ribosomal subunit protein bL27.